The primary structure comprises 429 residues: Enolase (429 aa).

Q162 lines the (2R)-2-phosphoglycerate pocket. Residue E204 is the Proton donor of the active site. Mg(2+)-binding residues include D241, E283, and D310. Residues K335, R364, S365, and K386 each coordinate (2R)-2-phosphoglycerate. K335 functions as the Proton acceptor in the catalytic mechanism.

This sequence belongs to the enolase family. Mg(2+) serves as cofactor.

The protein resides in the cytoplasm. Its subcellular location is the secreted. It is found in the cell surface. The catalysed reaction is (2R)-2-phosphoglycerate = phosphoenolpyruvate + H2O. It functions in the pathway carbohydrate degradation; glycolysis; pyruvate from D-glyceraldehyde 3-phosphate: step 4/5. Catalyzes the reversible conversion of 2-phosphoglycerate (2-PG) into phosphoenolpyruvate (PEP). It is essential for the degradation of carbohydrates via glycolysis. The sequence is that of Enolase from Mycolicibacterium vanbaalenii (strain DSM 7251 / JCM 13017 / BCRC 16820 / KCTC 9966 / NRRL B-24157 / PYR-1) (Mycobacterium vanbaalenii).